A 291-amino-acid chain; its full sequence is MTVKPDWLRVKAPQWERVGNVKEILRDLALNTVCEEASCPNIGECFQAGTATFLIMGPACTRACPYCDIDFEKKPKALDPTEPTRLAEAVRRMRLNHVVITSVNRDDLPDGGASQFVKCIAEVRAVSPQTTIEVLIPDLCGNWEALRIILQASPEVLNHNTETIPRLYRRVRPQGNYDRTLELLQRSRQIAPWLYTKSGIMVGLGETNAEVRQVMQDLRAVDCDILTIGQYLQPSQKHLQVNDFVTPEQFAAWQVYGEELGFLQVVSSPLTRSSYHAEQVRQLMERYPRNK.

Residues Cys-34, Cys-39, Cys-45, Cys-60, Cys-64, Cys-67, and Ser-274 each contribute to the [4Fe-4S] cluster site. Positions 46–263 constitute a Radical SAM core domain; sequence FQAGTATFLI…QVYGEELGFL (218 aa).

Belongs to the radical SAM superfamily. Lipoyl synthase family. [4Fe-4S] cluster serves as cofactor.

The protein resides in the cytoplasm. It carries out the reaction [[Fe-S] cluster scaffold protein carrying a second [4Fe-4S](2+) cluster] + N(6)-octanoyl-L-lysyl-[protein] + 2 oxidized [2Fe-2S]-[ferredoxin] + 2 S-adenosyl-L-methionine + 4 H(+) = [[Fe-S] cluster scaffold protein] + N(6)-[(R)-dihydrolipoyl]-L-lysyl-[protein] + 4 Fe(3+) + 2 hydrogen sulfide + 2 5'-deoxyadenosine + 2 L-methionine + 2 reduced [2Fe-2S]-[ferredoxin]. The protein operates within protein modification; protein lipoylation via endogenous pathway; protein N(6)-(lipoyl)lysine from octanoyl-[acyl-carrier-protein]: step 2/2. Functionally, catalyzes the radical-mediated insertion of two sulfur atoms into the C-6 and C-8 positions of the octanoyl moiety bound to the lipoyl domains of lipoate-dependent enzymes, thereby converting the octanoylated domains into lipoylated derivatives. The polypeptide is Lipoyl synthase 1 (Nostoc sp. (strain PCC 7120 / SAG 25.82 / UTEX 2576)).